The primary structure comprises 288 residues: Aquaporin PIP2-4 (288 aa).

Residues 1 to 24 form a disordered region; it reads MAKDIEASGPEAGEFSAKDYTDPP. Helical transmembrane passes span 42–62 and 79–99; these read AVIA…ATVI and CGGV…FILV. The NPA 1 motif lies at 111–113; the sequence is NPA. A run of 3 helical transmembrane segments spans residues 130–150, 172–192, and 206–226; these read LLYI…VKGF, GTGL…VFSA, and VLAP…TIPI. The NPA 2 motif lies at 232–234; it reads NPA. Residues 254–274 form a helical membrane-spanning segment; it reads IFWVGPLIGAAIAAAYHQYVL.

The protein belongs to the MIP/aquaporin (TC 1.A.8) family. PIP (TC 1.A.8.11) subfamily. As to quaternary structure, homomers. May interact with PIP1-2 to form heteromers. Expressed in the root growing zone at 5-6 mm from the root tip.

Its subcellular location is the cell membrane. In terms of biological role, water channel required to facilitate the transport of water across cell membrane. Active as homomers. Increased activity when heteromerization with PIP1-2. This chain is Aquaporin PIP2-4 (PIP2-4), found in Zea mays (Maize).